The chain runs to 79 residues: Acyl carrier protein (79 aa).

Residues 2–77 (DNIEQRVKKI…QAIDYARANV (76 aa)) form the Carrier domain. The residue at position 37 (S37) is an O-(pantetheine 4'-phosphoryl)serine.

Belongs to the acyl carrier protein (ACP) family. Post-translationally, 4'-phosphopantetheine is transferred from CoA to a specific serine of apo-ACP by AcpS. This modification is essential for activity because fatty acids are bound in thioester linkage to the sulfhydryl of the prosthetic group.

The protein localises to the cytoplasm. The protein operates within lipid metabolism; fatty acid biosynthesis. Carrier of the growing fatty acid chain in fatty acid biosynthesis. This is Acyl carrier protein from Burkholderia cenocepacia (strain HI2424).